Consider the following 81-residue polypeptide: Photosystem I iron-sulfur center (81 aa).

2 consecutive 4Fe-4S ferredoxin-type domains span residues 2-31 (SHSV…MVPW) and 37-68 (GQIA…IRVY). The [4Fe-4S] cluster site is built by C11, C14, C17, C21, C48, C51, C54, and C58.

In terms of assembly, the cyanobacterial PSI reaction center is composed of one copy each of PsaA,B,C,D,E,F,I,J,K,L,M and X, and forms trimeric complexes. The cofactor is [4Fe-4S] cluster.

Its subcellular location is the cellular thylakoid membrane. It catalyses the reaction reduced [plastocyanin] + hnu + oxidized [2Fe-2S]-[ferredoxin] = oxidized [plastocyanin] + reduced [2Fe-2S]-[ferredoxin]. Functionally, apoprotein for the two 4Fe-4S centers FA and FB of photosystem I (PSI); essential for photochemical activity. FB is the terminal electron acceptor of PSI, donating electrons to ferredoxin. The C-terminus interacts with PsaA/B/D and helps assemble the protein into the PSI complex. Required for binding of PsaD and PsaE to PSI. PSI is a plastocyanin/cytochrome c6-ferredoxin oxidoreductase, converting photonic excitation into a charge separation, which transfers an electron from the donor P700 chlorophyll pair to the spectroscopically characterized acceptors A0, A1, FX, FA and FB in turn. This chain is Photosystem I iron-sulfur center, found in Synechococcus sp. (strain RCC307).